The sequence spans 195 residues: O-methyltransferase (195 aa).

This sequence belongs to the methyltransferase superfamily.

The protein operates within secondary metabolite biosynthesis. O-methyltransferase; part of the gene cluster that mediates the biosynthesis of pyrophen and campyrone B, which represent a class of fungal amino acid-derived alpha-pyrone natural products. The first step of pyrophen biosynthesis is catalyzed by the PKS-NRPS hybrid synthetase ATPKS that uptakes and condensates L-phenylalanine and malonyl-CoA in order to produce desmethyldesacetylpyrophen. Although the A domain does not discriminate between 2 enantiomeric phenylalanines, the downstream KS domain must play a gate keeping role to stereoselectively accept the L-phenylalanyl-S-phosphopantetheine (Ppant)-T domain intermediate for chain elongation. The resulting amino acid derived diketide is off-loaded through lactonization to yield the alpha-pyrone intermediate desmethyldesacetylpyrophen. The cluster-specific O-methyltransferase (OMT) then methylates desmethyldesacetylpyrophen to desacetylpyrophen, which is further acetylated to pyrophen by an endogenous yet unidentified N-acetyltransferase. ATPKS has relaxed substrate specificity to activate and extend branched-chain amino acid L-leucine to produce small amounts of campyrone B. This is O-methyltransferase from Aspergillus niger (strain ATCC 1015 / CBS 113.46 / FGSC A1144 / LSHB Ac4 / NCTC 3858a / NRRL 328 / USDA 3528.7).